The primary structure comprises 978 residues: Regulator of telomere elongation helicase 1 homolog (978 aa).

Residues 7–318 (NGIPVNFPFE…EDDDAKKDFT (312 aa)) enclose the Helicase ATP-binding domain. 42-49 (SPTGTGKT) provides a ligand contact to ATP. [4Fe-4S] cluster is bound by residues C159, C177, C186, and C222. The DEAH box signature appears at 265 to 268 (DEAH).

This sequence belongs to the helicase family. RAD3/XPD subfamily.

Its subcellular location is the nucleus. The catalysed reaction is ATP + H2O = ADP + phosphate + H(+). Its function is as follows. A probable ATP-dependent DNA helicase implicated in DNA repair and the maintenance of genomic stability. Acts as an anti-recombinase to counteract toxic recombination and limit crossover during meiosis. Regulates meiotic recombination and crossover homeostasis by physically dissociating strand invasion events and thereby promotes noncrossover repair by meiotic synthesis dependent strand annealing (SDSA) as well as disassembly of D loop recombination intermediates. The protein is Regulator of telomere elongation helicase 1 homolog of Culex quinquefasciatus (Southern house mosquito).